The following is a 370-amino-acid chain: Cobalt-precorrin-5B C(1)-methyltransferase (370 aa).

The protein belongs to the CbiD family.

It catalyses the reaction Co-precorrin-5B + S-adenosyl-L-methionine = Co-precorrin-6A + S-adenosyl-L-homocysteine. Its pathway is cofactor biosynthesis; adenosylcobalamin biosynthesis; cob(II)yrinate a,c-diamide from sirohydrochlorin (anaerobic route): step 6/10. In terms of biological role, catalyzes the methylation of C-1 in cobalt-precorrin-5B to form cobalt-precorrin-6A. The protein is Cobalt-precorrin-5B C(1)-methyltransferase of Prochlorococcus marinus (strain MIT 9312).